The sequence spans 536 residues: Global nitrogen regulator NrpR (536 aa).

The segment at Val7 to Leu72 is winged helix-turn-helix. NRD stretches follow at residues Arg80–Phe314 and Lys315–Ile536.

This sequence belongs to the NrpR family. As to quaternary structure, homotetramer. Binds to a single operator as a dimer and cooperatively to two operators as a dimer pair.

With respect to regulation, under nitrogen limitation, binding of the intracellular nitrogen metabolite 2-oxoglutarate to NrpR decreases the binding affinity of NrpR to DNA, leading to initiation of transcription. Its function is as follows. Transcriptional repressor of nitrogen fixation and assimilation genes. Binds to two tandem operators in the glnA and nif promoters, thereby blocking transcription of the genes. This chain is Global nitrogen regulator NrpR, found in Methanococcus maripaludis (strain DSM 14266 / JCM 13030 / NBRC 101832 / S2 / LL).